Consider the following 147-residue polypeptide: Antiholin-like protein LrgA (147 aa).

Transmembrane regions (helical) follow at residues 12-32 (PAHF…SKII), 35-55 (FMPI…VLLC), 74-94 (NIGL…GVIS), and 98-118 (FLII…TGYV).

It belongs to the CidA/LrgA family. LrgA subfamily.

It localises to the cell membrane. Functionally, inhibits the expression or activity of extracellular murein hydrolases by interacting, possibly with LrgB, with the holin-like proteins CidA and/or CidB. The LrgAB and CidAB proteins may affect the proton motive force of the membrane. May be involved in programmed cell death (PCD), possibly triggering PCD in response to antibiotics and environmental stresses. This chain is Antiholin-like protein LrgA, found in Staphylococcus aureus (strain MSSA476).